The following is a 255-amino-acid chain: Imidazole glycerol phosphate synthase subunit HisF (255 aa).

Active-site residues include Asp12 and Asp131.

The protein belongs to the HisA/HisF family. Heterodimer of HisH and HisF.

It is found in the cytoplasm. The enzyme catalyses 5-[(5-phospho-1-deoxy-D-ribulos-1-ylimino)methylamino]-1-(5-phospho-beta-D-ribosyl)imidazole-4-carboxamide + L-glutamine = D-erythro-1-(imidazol-4-yl)glycerol 3-phosphate + 5-amino-1-(5-phospho-beta-D-ribosyl)imidazole-4-carboxamide + L-glutamate + H(+). The protein operates within amino-acid biosynthesis; L-histidine biosynthesis; L-histidine from 5-phospho-alpha-D-ribose 1-diphosphate: step 5/9. In terms of biological role, IGPS catalyzes the conversion of PRFAR and glutamine to IGP, AICAR and glutamate. The HisF subunit catalyzes the cyclization activity that produces IGP and AICAR from PRFAR using the ammonia provided by the HisH subunit. The protein is Imidazole glycerol phosphate synthase subunit HisF of Neisseria gonorrhoeae (strain ATCC 700825 / FA 1090).